The sequence spans 983 residues: Bifunctional glutamine synthetase adenylyltransferase/adenylyl-removing enzyme (983 aa).

Residues 1–490 (MDRKSSVTID…AHGQVFYSPV (490 aa)) are adenylyl removase. Residues 496-983 (RIPTQDLRMS…RVVDAVFWNQ (488 aa)) form an adenylyl transferase region.

The protein belongs to the GlnE family. Requires Mg(2+) as cofactor.

It catalyses the reaction [glutamine synthetase]-O(4)-(5'-adenylyl)-L-tyrosine + phosphate = [glutamine synthetase]-L-tyrosine + ADP. The catalysed reaction is [glutamine synthetase]-L-tyrosine + ATP = [glutamine synthetase]-O(4)-(5'-adenylyl)-L-tyrosine + diphosphate. Its function is as follows. Involved in the regulation of glutamine synthetase GlnA, a key enzyme in the process to assimilate ammonia. When cellular nitrogen levels are high, the C-terminal adenylyl transferase (AT) inactivates GlnA by covalent transfer of an adenylyl group from ATP to specific tyrosine residue of GlnA, thus reducing its activity. Conversely, when nitrogen levels are low, the N-terminal adenylyl removase (AR) activates GlnA by removing the adenylyl group by phosphorolysis, increasing its activity. The regulatory region of GlnE binds the signal transduction protein PII (GlnB) which indicates the nitrogen status of the cell. The polypeptide is Bifunctional glutamine synthetase adenylyltransferase/adenylyl-removing enzyme (Cutibacterium acnes (strain DSM 16379 / KPA171202) (Propionibacterium acnes)).